Reading from the N-terminus, the 93-residue chain is Neutrophil cationic peptide 1 type B (93 aa).

The N-terminal stretch at 1–19 (MRTVPLFAACLLLTLMAQA) is a signal peptide. Residues 20–62 (EPLPRAADHSDTKMKGDREDHVAVISFWEEESTSLQDAGAGAG) constitute a propeptide that is removed on maturation. 3 disulfide bridges follow: Cys65–Cys93, Cys67–Cys82, and Cys72–Cys92.

It belongs to the alpha-defensin family. Bone marrow.

It is found in the secreted. Has antibiotic, anti-fungi and antiviral activity. The sequence is that of Neutrophil cationic peptide 1 type B from Cavia porcellus (Guinea pig).